Here is a 103-residue protein sequence, read N- to C-terminus: MQNQRIRIRLKGFDHRLIDQSTAEIVETAKRTGAQVRGPIPLPTRKERYTILTSPHVNKDARDQYELRTHKRLVDIVEPTEKTVDALMRLDLAAGVDVQISLG.

This sequence belongs to the universal ribosomal protein uS10 family. In terms of assembly, part of the 30S ribosomal subunit.

Its function is as follows. Involved in the binding of tRNA to the ribosomes. This Shewanella pealeana (strain ATCC 700345 / ANG-SQ1) protein is Small ribosomal subunit protein uS10.